We begin with the raw amino-acid sequence, 1293 residues long: Cilia- and flagella-associated protein 57 A (1293 aa).

The WD 1 repeat unit spans residues 72 to 113 (PGTKGITCMTLSPSKRLLAWSEDCDSGIIVVFDLIKLDKLEK). The interval 117 to 143 (QNYQEPSDKDKLDKQAEKDRRDRFEKE) is disordered. Over residues 122–143 (PSDKDKLDKQAEKDRRDRFEKE) the composition is skewed to basic and acidic residues. WD repeat units follow at residues 309–348 (PKNE…KNPY), 359–398 (DMKA…MQLN), 411–450 (FHSD…LENS), 535–574 (RGSG…PQKT), and 700–739 (SHFG…YQVK). Coiled-coil stretches lie at residues 756-1016 (RDQY…REKT), 1045-1079 (IKEL…FKRT), and 1209-1285 (INHL…QIQN).

This sequence belongs to the CFAP57 family. In terms of assembly, forms a heterodimer with CFAP57C. Associates with components of the nexin-dynein regulatory complex (N-DRC) and the CFAP184:CFAP263 complex.

It localises to the cell projection. Its subcellular location is the cilium. Associates with components of the nexin-dynein regulatory complex (N-DRC), a key regulator of ciliary/flagellar motility, and might act as an inner dynein arm (IDA) hub or linkage. This Tetrahymena thermophila (strain SB210) protein is Cilia- and flagella-associated protein 57 A (CFAP57A).